The primary structure comprises 266 residues: L-cystine-binding protein TcyJ (266 aa).

The first 29 residues, 1–29 (MKLAHLGRQALMGVMAVALVAGMSVKSFA), serve as a signal peptide directing secretion.

It belongs to the bacterial solute-binding protein 3 family. In terms of assembly, the complex is composed of two ATP-binding proteins (TcyN), two transmembrane proteins (TcyL) and a solute-binding protein (TcyJ).

The protein localises to the periplasm. Its function is as follows. Part of the ABC transporter complex TcyJLN involved in L-cystine import. Binds cystine. This Escherichia coli O6:H1 (strain CFT073 / ATCC 700928 / UPEC) protein is L-cystine-binding protein TcyJ.